Consider the following 430-residue polypeptide: KIN17-like protein (430 aa).

The segment at 28 to 50 (CQMCQKQCRDENGFKCHCMSESH) adopts a C2H2-type zinc-finger fold. Residues 51–160 (QRQMQVFGQA…KARLKRKRIK (110 aa)) form a winged helix-turn-helix (wHTH) region. A coiled-coil region spans residues 147-183 (EQAVKARLKRKRIKSDLAEDERQERMIARQIERAQQS). Residues 155-158 (KRKR) carry the Nuclear localization signal (NLS) motif. Disordered regions lie at residues 179 to 230 (RAQQ…ANKA) and 261 to 284 (EEEDEVSARDKEKEELAKKKGKDA). Acidic residues predominate over residues 191-224 (LGDDASPDGSEGESGSEDEYSDSENDHEGQEEDA). Residues 261-278 (EEEDEVSARDKEKEELAK) are compositionally biased toward basic and acidic residues. Residues 283 to 312 (DAINAAEARRSALDELMKEEEKAKERSNRK) are a coiled coil. The tract at residues 319 to 370 (GIVVKVMSKSLAEKGYCKQKGVVKRVIDKYVGEIEMLESKHVLRVDQDELET) is C-terminal subdomain A. Residues 376-427 (GGLVRIVNGAYRGSNARLLSVDTERFCAKVQVEKGLYDGKVLKAIEYEDICK) form a C-terminal subdomain B region.

This sequence belongs to the KIN17 family.

The protein resides in the nucleus. This is KIN17-like protein from Oryza sativa subsp. japonica (Rice).